We begin with the raw amino-acid sequence, 1450 residues long: MATRATRAASEVAKTKAATNLPSIRKRKSIENEEEESKHNTSINDDGELDSDIDEEDESKFEKEFTVKKRQKKSPAKTQQQPQKSITTPTKPTPTKTTSKPTKPSATTSPSQQKQSSQSSQNTSKKQATSSSSQQSTQQKKKETKIKYNLKPINIERLATYDQHMSGTLSNEKIIKRLKKLDEYLQDKKRGNTEGLEIVLEVLIDPKFADNKIFEIRLMTSCCLSEIFRIYAPTLPFDMVVLKVVFKLFTEQVLQGDKVDKKLFPQYFQMLERLSVIKVFALLALVDSSMLTPFFKDCLSRVHGDKEHQPMDIMFSTLLNTILESLEEVPTSLWNELLESLIEREKGGVPTSKAIFTHDLIETNSRFLQVHFDLFLQDLLEPEILAGGQQQQQQDSSLSNNGISKQLKKKKNEILFEMFNILPEFIYPALQNLEFDLEDVNASIRKGAAIVLSRCYSTESASDELIAQRPTLYTTFLNRFHDVDIKIRTVMMEFSEHFTTTSDLEMERVLKSVRDRFRDSEPDIRIKAIQIFQKYIIKNPELMNPELMSEYLERVRDKDSKVRKDAEISLSTVWRSVREKYGPIDDWSNTLIDCFSTIPNTLIHCLGLYDDDKYRIEIAFDSILLPQHSDVKNRSQVFLEIYKYLDESNKQLFKKYLEEKKSLRQEFLALIQFLKNPKVVGGSTTPTSKKSQPPQQQQQQQQQQQQQLQQPENDIEVYITHVDNLLPKFIGESSKKLVRQLITPSNKKILDLLVLISDINTTFQEQYNIKISIISKAQNESSFSEFIKYMVNKLAYSIVGKENIKYLLRGLRSDLGLDNFDKNNPIDLLEEFNEKIYEKEVKDGVPETLEVLLMLSQVYANIFDDYGDQLVGFLTCSKSIVYPVLQILSNSWKTLKLSKKTLKSTLDMLLRLTQVPQPTLARLAFKTFIKFATPALTSINSTNGKVDNNKLVVTLKDLANNLFDQLEDKSKNLLSILEVIGCLAKGYSLVLSEHLDTLDILLIKKIMTGVCTLDFNQKVQLNKSVEHHLNTSYSKDVLIKIAAIKCMSNYLLGLREITKKSHEMVNMLFEFYIGLDKNKTYNDLEKSHLKIHIAIGLLRVFQRSQYEKEITPQQFILICNSTSITTKQRGDPLIRRLIEKLAKVMILNRLPMKYMAAFGMAAQQPYSVLALVRKHSTSIIKTRRMVISRLAASLSMAKNLTEFYPESSMPYFLYVVSHREDFERDAPDYIESACYLNFFIDLLVEEADNYSIIHTIFTKLKRSTDALDKKSKNHIIAAELGLQILTHQYQQKKWKPQKHPIVIVLPEKFYIIHDDQDEMSIDDEVTSIKLPSLLPKRFKLPPLPSITDQNNNNNNNNTNSTNNDESEKDENNNNKNDNDNDNDNDDNSTTAVPQKSIISKPPAKKVSKKAAAKQKSPKKKTNKKKKQSSSEEEVSSSEEEDESQDEEVEN.

3 disordered regions span residues 1–145, 680–707, and 1340–1450; these read MATR…KETK, VGGS…QQQQ, and LPPL…EVEN. A compositionally biased stretch (acidic residues) spans 45 to 59; the sequence is DDGELDSDIDEEDES. Residues 77–138 are compositionally biased toward low complexity; the sequence is KTQQQPQKSI…TSSSSQQSTQ (62 aa). The stretch at 650–716 forms a coiled coil; that stretch reads KQLFKKYLEE…QLQQPENDIE (67 aa). Residues 682–691 are compositionally biased toward polar residues; it reads GSTTPTSKKS. Low complexity-rich tracts occupy residues 692–707 and 1350–1363; these read QPPQ…QQQQ and NNNN…STNN. Positions 1369-1378 are enriched in basic and acidic residues; sequence DENNNNKNDN. The span at 1387 to 1401 shows a compositional bias: low complexity; that stretch reads NSTTAVPQKSIISKP. Basic residues predominate over residues 1402 to 1427; the sequence is PAKKVSKKAAAKQKSPKKKTNKKKKQ. A compositionally biased stretch (acidic residues) spans 1430 to 1450; that stretch reads SEEEVSSSEEEDESQDEEVEN.

The protein belongs to the PDS5 family.

The protein localises to the nucleus. In terms of biological role, may regulate sister chromatid cohesion during mitosis and couple it to DNA replication. The sequence is that of Sister chromatid cohesion protein PDS5 homolog from Dictyostelium discoideum (Social amoeba).